The following is a 465-amino-acid chain: Argininosuccinate lyase (465 aa).

Belongs to the lyase 1 family. Argininosuccinate lyase subfamily.

The protein localises to the cytoplasm. It catalyses the reaction 2-(N(omega)-L-arginino)succinate = fumarate + L-arginine. It functions in the pathway amino-acid biosynthesis; L-arginine biosynthesis; L-arginine from L-ornithine and carbamoyl phosphate: step 3/3. This is Argininosuccinate lyase from Deinococcus deserti (strain DSM 17065 / CIP 109153 / LMG 22923 / VCD115).